The chain runs to 432 residues: ATP-dependent RNA helicase RhlB (432 aa).

Residues 9-37 (KKFSDFALHPKVIEALEKKGFSNCTQIQA) carry the Q motif motif. One can recognise a Helicase ATP-binding domain in the interval 40 to 219 (LPITVKGHDI…FEQMNNPEYV (180 aa)). Residue 53–60 (AQTGTGKT) participates in ATP binding. The DEAD box motif lies at 165-168 (DEAD). Residues 245–390 (RLLQTLIEEE…VSKYNSDALL (146 aa)) form the Helicase C-terminal domain. The interval 393–432 (LPEPKRRHRPRQGQPRRNNSAPRRGNNTQRNNRNKRPSHS) is disordered. The span at 404 to 423 (QGQPRRNNSAPRRGNNTQRN) shows a compositional bias: low complexity.

Belongs to the DEAD box helicase family. RhlB subfamily. As to quaternary structure, component of the RNA degradosome, which is a multiprotein complex involved in RNA processing and mRNA degradation.

Its subcellular location is the cytoplasm. The enzyme catalyses ATP + H2O = ADP + phosphate + H(+). In terms of biological role, DEAD-box RNA helicase involved in RNA degradation. Has RNA-dependent ATPase activity and unwinds double-stranded RNA. This Proteus mirabilis (strain HI4320) protein is ATP-dependent RNA helicase RhlB.